Reading from the N-terminus, the 921-residue chain is MTVAYSLENLKKISNSLVGDQLAKVDYFLAPKCQIFQCLLSIEQSDGVELKNAKLDLLYTLLHLEPQQRDIVGTYYFDIVSAIYKSMSLASSFTKNNSSTNYKYIKLLNLCAGVYPNCGFPDLQYLQNGFIQLVNHKFLRSKCKIDEVVTIIELLKLFLLVDEKNCSDFNKSKFMEEEREVTETSHYQDFKMAESLEHIIVKISSKYLDQISLKYIVRLKVSRPASPSSVKNDPFDNKGVDCTRAIPKKINISNMYDSSLLSLALLLYLRYHYMIPGDRKLRNDATFKMFVLGLLKSNDVNIRCVALKFLLQPYFTEDKKWEDTRTLEKILPYLVKSFNYDPLPWWFDPFDMLDSLIVLYNEITPMNNPVLTTLAHTNVIFCILSRFAQCLSLPQHNEATLKTTTKFIKICASFAASDEKYRLLLLNDTLLLNHLEYGLESHITLIQDFISLKDEIKETTTESHSMCLPPIYDHDFVAAWLLLLKSFSRSVSALRTTLKRNKIAQLLLQILSKTYTLTKECYFAGQDFMKPEIMIMGITLGSICNFVVEFSNLQSFMLRNGIIDIIEKMLTDPLFNSKKAWDDNEDERRIALQGIPVHEVKANSLWVLRHLMYNCQNEEKFQLLAKIPMNLILDFINDPCWAVQAQCFQLLRNLTCNSRKIVNILLEKFKDVEYKIDPQTGNKISIGSTYLFEFLAKKMRLLNPLDTQQKKAMEGILYIIVNLAAVNENKKQLVIEQDEILNIMSEILVETTTDSSSNGNDSNLKLACLWVLNNLLWNSSVSHYTQYAIENGLEPGHSPSDSENPQSTVTIGYNESVAGGYSRGKYYDEPDGDDSSSNANDDEDDDNDEGDDEGDEFVRTPAAKGSTSNVQVTRATVERCRKLVEVGLYDLVRKNITDESLSVREKARTLLYHMDLLLKVK.

Position 226 is a phosphoserine (S226). 5 ARM repeats span residues 491–530 (VSAL…DFMK), 551–592 (SNLQ…RIAL), 617–656 (NEEK…NLTC), 683–725 (KISI…NLAA), and 729–777 (NKKQ…NLLW). A disordered region spans residues 822–867 (SRGKYYDEPDGDDSSSNANDDEDDDNDEGDDEGDEFVRTPAAKGST). The span at 829–855 (EPDGDDSSSNANDDEDDDNDEGDDEGD) shows a compositional bias: acidic residues.

This sequence belongs to the VID28/GID5 family. In terms of assembly, identified in the GID/CTLH complex. In the absence of stress, the complex exists as an inactive anticipatory complex (GID(Ant)), composed of VID30/GID1, the E3 ubiquitin-ligase RMD5/GID2, VID28/GID5, GID8, and the RING-like subunit FYV10/GID9, awaiting a substrate receptor to form the active E3 ligase complex. When cells are shifted to glucose-containing medium, the substrate receptor VID24/GID4 is induced and becomes part of the complex, named GID(SR4). Additionally, GID7 transforms the GID(SR4) E3 ligase core into a higher-order supramolecular assembly (Chelator-GID(SR4)) specifically tailored for FBP1 ubiquitination. Under osmotic or heat stress, the substrate receptor GID10 is induced and becomes part of the complex, named GID(SR10). Within the GID complex, interacts directly with RMD5/GID2 and FYV10/GID9, and recruits VID24/GID4 to the complex when cells are shifted to glucose-containing medium.

It localises to the nucleus. It is found in the cytoplasm. Component of the GID E3 ligase complex recruiting N termini and catalyzing ubiquitination of proteins targeted for degradation. GID E3 is regulated through assembly with interchangeable N-degron-binding substrate receptors induced by distinct environmental perturbations. Required for the adaptation to the presence of glucose in the growth medium; mediates in association with the substrate receptor VID24/GID4 the degradation of enzymes involved in gluconeogenesis when cells are shifted to glucose-containing medium. Required for proteasome-dependent catabolite degradation of fructose-1,6-bisphosphatase (FBP1), malate dehydrogenase (MDH2), and other gluconeogenic enzymes. This Saccharomyces cerevisiae (strain ATCC 204508 / S288c) (Baker's yeast) protein is GID complex subunit 5.